The sequence spans 132 residues: Phosphoribosyl-AMP cyclohydrolase (132 aa).

Aspartate 86 serves as a coordination point for Mg(2+). Position 87 (cysteine 87) interacts with Zn(2+). The Mg(2+) site is built by aspartate 88 and aspartate 90. Residues cysteine 103 and cysteine 110 each coordinate Zn(2+).

This sequence belongs to the PRA-CH family. In terms of assembly, homodimer. Mg(2+) serves as cofactor. It depends on Zn(2+) as a cofactor.

The protein localises to the cytoplasm. It catalyses the reaction 1-(5-phospho-beta-D-ribosyl)-5'-AMP + H2O = 1-(5-phospho-beta-D-ribosyl)-5-[(5-phospho-beta-D-ribosylamino)methylideneamino]imidazole-4-carboxamide. It functions in the pathway amino-acid biosynthesis; L-histidine biosynthesis; L-histidine from 5-phospho-alpha-D-ribose 1-diphosphate: step 3/9. Its function is as follows. Catalyzes the hydrolysis of the adenine ring of phosphoribosyl-AMP. In Haloquadratum walsbyi (strain DSM 16790 / HBSQ001), this protein is Phosphoribosyl-AMP cyclohydrolase.